Here is a 53-residue protein sequence, read N- to C-terminus: UPF0391 membrane protein YPTS_0599 (53 aa).

A run of 2 helical transmembrane segments spans residues 4 to 24 and 27 to 47; these read WGII…GGLA and AAWA…ISLF.

Belongs to the UPF0391 family.

The protein resides in the cell membrane. In Yersinia pseudotuberculosis serotype IB (strain PB1/+), this protein is UPF0391 membrane protein YPTS_0599.